Consider the following 411-residue polypeptide: Arginase (411 aa).

Residues 83–106 (NNYINNNDNNNDNNNDNNNDNNNN) form a disordered region. Positions 193, 216, 218, and 220 each coordinate Mn(2+). Positions 222, 229, and 274 each coordinate L-arginine. Residues aspartate 323 and aspartate 325 each contribute to the Mn(2+) site.

This sequence belongs to the arginase family. In terms of assembly, homotrimer; oligomerization is dependent on Mn(2+) binding. The cofactor is Mn(2+).

It carries out the reaction L-arginine + H2O = urea + L-ornithine. It participates in nitrogen metabolism; urea cycle; L-ornithine and urea from L-arginine: step 1/1. Its activity is regulated as follows. Feedback inhibition by product L-ornithine,. Inhibited by 2(S)-amino-6-boronohexanoic acid (ABH); however, with less efficiency than human ARG1. In terms of biological role, catalyzes the hydrolysis of L-arginine into urea and L-ornithine, which is a precursor for polyamine biosynthesis. May play a role in parasite intra-hepatic development during the host liver stage. This is Arginase from Plasmodium falciparum (isolate 3D7).